The following is a 380-amino-acid chain: Queuine tRNA-ribosyltransferase (380 aa).

D96 functions as the Proton acceptor in the catalytic mechanism. Substrate-binding positions include 96-100 (DSGGF), D150, Q193, and G220. The RNA binding stretch occupies residues 251–257 (GVGAPDS). The active-site Nucleophile is D270. An RNA binding; important for wobble base 34 recognition region spans residues 275 to 279 (TRIAR). The Zn(2+) site is built by C308, C310, C313, and H339.

The protein belongs to the queuine tRNA-ribosyltransferase family. Homodimer. Within each dimer, one monomer is responsible for RNA recognition and catalysis, while the other monomer binds to the replacement base PreQ1. Requires Zn(2+) as cofactor.

The catalysed reaction is 7-aminomethyl-7-carbaguanine + guanosine(34) in tRNA = 7-aminomethyl-7-carbaguanosine(34) in tRNA + guanine. It participates in tRNA modification; tRNA-queuosine biosynthesis. Catalyzes the base-exchange of a guanine (G) residue with the queuine precursor 7-aminomethyl-7-deazaguanine (PreQ1) at position 34 (anticodon wobble position) in tRNAs with GU(N) anticodons (tRNA-Asp, -Asn, -His and -Tyr). Catalysis occurs through a double-displacement mechanism. The nucleophile active site attacks the C1' of nucleotide 34 to detach the guanine base from the RNA, forming a covalent enzyme-RNA intermediate. The proton acceptor active site deprotonates the incoming PreQ1, allowing a nucleophilic attack on the C1' of the ribose to form the product. After dissociation, two additional enzymatic reactions on the tRNA convert PreQ1 to queuine (Q), resulting in the hypermodified nucleoside queuosine (7-(((4,5-cis-dihydroxy-2-cyclopenten-1-yl)amino)methyl)-7-deazaguanosine). This Streptococcus pneumoniae (strain Taiwan19F-14) protein is Queuine tRNA-ribosyltransferase.